Consider the following 181-residue polypeptide: GTPase RhebL1 (181 aa).

GTP contacts are provided by residues 30 to 36, Gly61, 117 to 120, and 147 to 148; these read LEDYDPT, NKAD, and SA. Positions 33–41 match the Effector region motif; that stretch reads YDPTVENTY. Thr36 contributes to the Mg(2+) binding site. Cys178 carries the cysteine methyl ester modification. Cys178 is lipidated: S-farnesyl cysteine. The propeptide at 179–181 is removed in mature form; it reads HLM.

Belongs to the small GTPase superfamily. Rheb family. Interacts with MTOR.

The protein resides in the endomembrane system. It is found in the cytoplasm. The enzyme catalyses GTP + H2O = GDP + phosphate + H(+). Its function is as follows. Binds GTP and exhibits intrinsic GTPase activity. May activate NF-kappa-B-mediated gene transcription. Promotes signal transduction through MTOR, activates RPS6KB1, and is a downstream target of the small GTPase-activating proteins TSC1 and TSC2. The sequence is that of GTPase RhebL1 (RHEBL1) from Bos taurus (Bovine).